The following is a 147-amino-acid chain: Myoglobin (147 aa).

Residues 2 to 141 form the Globin domain; sequence ADFDAVLKCW…IIADLEANYK (140 aa). Residue His-60 participates in nitrite binding. His-60 contacts O2. His-89 is a binding site for heme b.

This sequence belongs to the globin family. In terms of assembly, monomeric.

Its subcellular location is the cytoplasm. It localises to the sarcoplasm. It carries out the reaction Fe(III)-heme b-[protein] + nitric oxide + H2O = Fe(II)-heme b-[protein] + nitrite + 2 H(+). The enzyme catalyses H2O2 + AH2 = A + 2 H2O. Functionally, monomeric heme protein which primary function is to store oxygen and facilitate its diffusion within muscle tissues. Reversibly binds oxygen through a pentacoordinated heme iron and enables its timely and efficient release as needed during periods of heightened demand. Depending on the oxidative conditions of tissues and cells, and in addition to its ability to bind oxygen, it also has a nitrite reductase activity whereby it regulates the production of bioactive nitric oxide. Under stress conditions, like hypoxia and anoxia, it also protects cells against reactive oxygen species thanks to its pseudoperoxidase activity. The chain is Myoglobin (mb) from Thunnus alalunga (Albacore).